A 310-amino-acid chain; its full sequence is Isoflavone reductase homolog A622-like (310 aa).

NADP(+) is bound by residues 13-19 (GGTGYIG), Arg-38, and Lys-47. The active-site Proton acceptor is the Lys-135. Arg-139 provides a ligand contact to NADP(+).

This sequence belongs to the NmrA-type oxidoreductase family. Isoflavone reductase subfamily. In terms of assembly, monomer. In terms of tissue distribution, expressed in roots.

It localises to the cytoplasm. Its pathway is alkaloid biosynthesis; nicotine biosynthesis. Functionally, involved in the biosynthesis of pyridine alkaloid natural products, leading mainly to the production of anabasine, anatabine, nicotine and nornicotine, effective deterrents against herbivores with antiparasitic and pesticide properties (neurotoxins); nornicotine serves as the precursor in the synthesis of the carcinogen compound N'-nitrosonornicotine (NNN). Reductase that may be involved in a late step of tobacco alkaloid biosynthesis. Maybe involved in either the formation of a nicotinic acid-derived precursor or the final condensation reaction of tobacco alkaloids. The protein is Isoflavone reductase homolog A622-like of Nicotiana tabacum (Common tobacco).